Reading from the N-terminus, the 195-residue chain is Imidazoleglycerol-phosphate dehydratase (195 aa).

This sequence belongs to the imidazoleglycerol-phosphate dehydratase family.

It localises to the cytoplasm. The catalysed reaction is D-erythro-1-(imidazol-4-yl)glycerol 3-phosphate = 3-(imidazol-4-yl)-2-oxopropyl phosphate + H2O. Its pathway is amino-acid biosynthesis; L-histidine biosynthesis; L-histidine from 5-phospho-alpha-D-ribose 1-diphosphate: step 6/9. This is Imidazoleglycerol-phosphate dehydratase from Bordetella petrii (strain ATCC BAA-461 / DSM 12804 / CCUG 43448).